The following is a 244-amino-acid chain: Type III pantothenate kinase (244 aa).

7-14 lines the ATP pocket; it reads DIGNTRLK. Substrate-binding positions include Tyr-95 and 102 to 105; that span reads GIDR. Asp-104 acts as the Proton acceptor in catalysis. Thr-126 is an ATP binding site. Substrate is bound at residue Thr-177.

This sequence belongs to the type III pantothenate kinase family. In terms of assembly, homodimer. It depends on NH4(+) as a cofactor. K(+) is required as a cofactor.

The protein localises to the cytoplasm. The enzyme catalyses (R)-pantothenate + ATP = (R)-4'-phosphopantothenate + ADP + H(+). The protein operates within cofactor biosynthesis; coenzyme A biosynthesis; CoA from (R)-pantothenate: step 1/5. Catalyzes the phosphorylation of pantothenate (Pan), the first step in CoA biosynthesis. This chain is Type III pantothenate kinase, found in Acinetobacter baumannii (strain AB307-0294).